The sequence spans 884 residues: Protein translocase subunit SecA (884 aa).

Residues glutamine 82, 100-104 (GEGKT), and aspartate 491 contribute to the ATP site.

It belongs to the SecA family.

The protein resides in the plastid. It is found in the chloroplast stroma. The protein localises to the chloroplast thylakoid membrane. It carries out the reaction ATP + H2O + cellular proteinSide 1 = ADP + phosphate + cellular proteinSide 2.. Functionally, has a central role in coupling the hydrolysis of ATP to the transfer of proteins across the thylakoid membrane. In Olisthodiscus luteus (Marine phytoflagellate), this protein is Protein translocase subunit SecA.